A 471-amino-acid chain; its full sequence is Argininosuccinate lyase (471 aa).

The protein belongs to the lyase 1 family. Argininosuccinate lyase subfamily.

The protein resides in the cytoplasm. It catalyses the reaction 2-(N(omega)-L-arginino)succinate = fumarate + L-arginine. It participates in amino-acid biosynthesis; L-arginine biosynthesis; L-arginine from L-ornithine and carbamoyl phosphate: step 3/3. This chain is Argininosuccinate lyase, found in Acidiphilium cryptum (strain JF-5).